A 4080-amino-acid chain; its full sequence is Hybrid PKS-NRPS synthetase poxE (4080 aa).

Residues 8–442 (REPIAIVGSG…GTNAHAIIEA (435 aa)) enclose the Ketosynthase family 3 (KS3) domain. Active-site for beta-ketoacyl synthase activity residues include cysteine 181, histidine 320, and histidine 362. A malonyl-CoA:ACP transacylase (MAT) domain region spans residues 554-878 (VFTGQGAQWA…QRGMNDVEAM (325 aa)). An N-terminal hotdog fold region spans residues 944–1078 (HPILGTRCPD…GRLVITYGPV (135 aa)). The PKS/mFAS DH domain maps to 944–1246 (HPILGTRCPD…AVPLEATNAD (303 aa)). Positions 945–1243 (PILGTRCPDG…GIHAVPLEAT (299 aa)) are dehydratase (DH) domain. The active-site Proton acceptor; for dehydratase activity is histidine 976. The tract at residues 1093 to 1246 (MVDVPSERFY…AVPLEATNAD (154 aa)) is C-terminal hotdog fold. Aspartate 1152 functions as the Proton donor; for dehydratase activity in the catalytic mechanism. Residues 1400–1585 (HFSDYLASVV…GVDTFTSDAD (186 aa)) are methyltransferase (MT) domain. The interval 2118–2292 (TYWLVGLTGS…AGSVMNIGAI (175 aa)) is ketoreductase (KR)domain. The tract at residues 2399 to 2478 (TTDEIYEVIK…TIGEIIKFVL (80 aa)) is peptidyl carrier protein. One can recognise a Carrier 1 domain in the interval 2405 to 2481 (EVIKECFIVK…EIIKFVLEKL (77 aa)). Serine 2441 is modified (O-(pantetheine 4'-phosphoryl)serine). Positions 2488 to 2569 (SLGLSPPTGA…AASPSIHTEE (82 aa)) are disordered. The segment covering 2511–2525 (VVVERRNVPRLEKKI) has biased composition (basic and acidic residues). The span at 2528–2545 (SAGSRTSSSVTGTSKSVS) shows a compositional bias: low complexity. Positions 2551–2565 (DTASSQTSEAASPSI) are enriched in polar residues. The segment at 2607-3036 (KEPLSFGQSR…DSKQPGGHVS (430 aa)) is condensation. The interval 3069–3478 (DMAKQYPQKL…DGRLRIEGRI (410 aa)) is adenylation. The Carrier 2 domain occupies 3593 to 3673 (AHLNEAQAQM…KMALLIKPQE (81 aa)). Positions 3598 to 3670 (AQAQMVQLWE…TLEKMALLIK (73 aa)) are thiolation. The residue at position 3633 (serine 3633) is an O-(pantetheine 4'-phosphoryl)serine. Residues 3740–3959 (LTGATGFIGQ…DFVPVEQVVR (220 aa)) form a reductase (RED) domain region.

The protein in the C-terminal section; belongs to the NRP synthetase family.

It participates in secondary metabolite biosynthesis. Its function is as follows. Hybrid PKS-NRPS synthetase; part of the gene cluster that mediates the biosynthesis of oxaleimides, cytotoxic compounds containing an unusual disubstituted succinimide moiety. The first step of the pathway is provided by the HR-PKS poxF that serves in a new mode of collaborative biosynthesis with the PKS-NRPS poxE, by providing the olefin containing amino acid substrate via the synthesis of an ACP-bound dec-4-enoate. The cytochrome P450 monooxygenase poxM-catalyzed oxidation at the alpha-position creates the enzyme-bound 2-hydroxydec-4-enoyl-ACP thioester, which may be prone to spontaneous hydrolysis to yield 2-hydroxydec-4-enoic acid due to increased electrophilicity of the carbonyl. 2-hydroxydec-4-enoic acid can then be further oxidized by poxM to yield the alpha-ketoacid 2-oxodec-4-enoicacid, which is reductively aminated by the aminotransferase poxL to yield (S,E)-2-aminodec-4-enoic acid. The Hybrid PKS-NRPS synthetase poxE then performs condensation between the octaketide product of its PKS modules and the amino group of (S,E)-2-aminodec-4-enoic acid which is activated and incorporated by the adenylation domain. The resulting aminoacyl product can be cyclized by the Diels-Alderase PoxQ and reductively released by the reductive (R) domain of poxE to yield an aldehyde intermediate. The released aldehyde is then substrate for a Knoevenagel condensation by the hydrolyase poxO followed by an oxidation at the 5-position of the pyrrolidone ring. The presence of the olefin from the amino acid building block allows for migration of the substituted allyl group to occur. This allylic transposition reaction takes place in a conjugate addition, semipinacol-like fashion to yield a succinimide intermediate. Iterative two-electron oxidations of the C7 methyl of the succinimide intermediate to the carboxylic acid can be catalyzed by one of two remaining cytochrome P450 monooxygenasess poxC or poxD to yield oxaleimide A. Subsequent oxidation yields the maleimide scaffold oxaleimide I. Both oxaleimide A and oxaleimide I can undergo oxidative modifications in the decalin ring to yield the series of products oxaleimides B to H. The chain is Hybrid PKS-NRPS synthetase poxE from Penicillium oxalicum.